Here is a 299-residue protein sequence, read N- to C-terminus: Nitrogenase iron protein (299 aa).

Residue 11–18 (GKGGIGKS) participates in ATP binding. Cys99 provides a ligand contact to [4Fe-4S] cluster. An ADP-ribosylarginine; by dinitrogenase reductase ADP-ribosyltransferase modification is found at Arg102. Cys133 contributes to the [4Fe-4S] cluster binding site.

It belongs to the NifH/BchL/ChlL family. Homodimer. [4Fe-4S] cluster serves as cofactor. In terms of processing, the reversible ADP-ribosylation of Arg-102 inactivates the nitrogenase reductase and regulates nitrogenase activity.

It catalyses the reaction N2 + 8 reduced [2Fe-2S]-[ferredoxin] + 16 ATP + 16 H2O = H2 + 8 oxidized [2Fe-2S]-[ferredoxin] + 2 NH4(+) + 16 ADP + 16 phosphate + 6 H(+). In terms of biological role, the key enzymatic reactions in nitrogen fixation are catalyzed by the nitrogenase complex, which has 2 components: the iron protein and the molybdenum-iron protein. In Methylobacterium nodulans (strain LMG 21967 / CNCM I-2342 / ORS 2060), this protein is Nitrogenase iron protein.